The primary structure comprises 631 residues: DNA mismatch repair protein MutL (631 aa).

The disordered stretch occupies residues 389–423; that stretch reads GEREASRQAGGQRVQETQMSSYGSGQSGGRGRSYA.

This sequence belongs to the DNA mismatch repair MutL/HexB family.

In terms of biological role, this protein is involved in the repair of mismatches in DNA. It is required for dam-dependent methyl-directed DNA mismatch repair. May act as a 'molecular matchmaker', a protein that promotes the formation of a stable complex between two or more DNA-binding proteins in an ATP-dependent manner without itself being part of a final effector complex. In Shewanella loihica (strain ATCC BAA-1088 / PV-4), this protein is DNA mismatch repair protein MutL.